A 279-amino-acid chain; its full sequence is Protein ABIL4 (279 aa).

Disordered regions lie at residues 192 to 211 (VHNN…PMRF) and 219 to 241 (LLKR…EPQR). Polar residues predominate over residues 194 to 208 (NNINNRTPNKRSNSP). A compositionally biased stretch (low complexity) spans 219 to 228 (LLKRSSSPSQ).

Belongs to the ABI family. In terms of assembly, binds SCAR.

The protein resides in the cytoplasm. It is found in the cytoskeleton. In terms of biological role, involved in regulation of actin and microtubule organization. Part of a WAVE complex that activates the Arp2/3 complex. This is Protein ABIL4 (ABIL4) from Arabidopsis thaliana (Mouse-ear cress).